We begin with the raw amino-acid sequence, 407 residues long: ATP-citrate synthase subunit alpha chain protein 1 (407 aa).

Residues asparagine 327, threonine 329, and arginine 360 each coordinate citrate.

This sequence belongs to the succinate/malate CoA ligase beta subunit family. In terms of assembly, heterooctamer of 4 alpha and 4 beta chains.

It localises to the cytoplasm. It is found in the cytosol. It catalyses the reaction oxaloacetate + acetyl-CoA + ADP + phosphate = citrate + ATP + CoA. Functionally, ATP citrate-lyase is the primary enzyme responsible for the synthesis of cytosolic acetyl-CoA, used for the elongation of fatty acids and biosynthesis of isoprenoids, flavonoids and malonated derivatives. May supply substrate to the cytosolic acetyl-CoA carboxylase, which generates the malonyl-CoA used for the synthesis of a multitude of compounds, including very long chain fatty acids and flavonoids. In contrast to all known animal ACL enzymes having a homomeric structure, plant ACLs are composed of alpha and beta chains. This Oryza sativa subsp. japonica (Rice) protein is ATP-citrate synthase subunit alpha chain protein 1 (ACLA-1).